The chain runs to 215 residues: Glycerol-3-phosphate acyltransferase (215 aa).

6 helical membrane passes run 3–23 (LILLILTAYLLGSIPTGLWIG), 42–61 (TNTFRILGLKAGAATLLIDI), 68–90 (TLLPVLVGASNVSPIAIGFFAVL), 110–130 (AGVLLGFAPLYLLFLAAVFVL), 134–154 (LFSMISLASLTASVVAVISVL), and 162–182 (LLPGYDWLLTITIVVLAAIII).

This sequence belongs to the PlsY family. As to quaternary structure, probably interacts with PlsX.

The protein localises to the cell membrane. It catalyses the reaction an acyl phosphate + sn-glycerol 3-phosphate = a 1-acyl-sn-glycero-3-phosphate + phosphate. It participates in lipid metabolism; phospholipid metabolism. Functionally, catalyzes the transfer of an acyl group from acyl-phosphate (acyl-PO(4)) to glycerol-3-phosphate (G3P) to form lysophosphatidic acid (LPA). This enzyme utilizes acyl-phosphate as fatty acyl donor, but not acyl-CoA or acyl-ACP. The sequence is that of Glycerol-3-phosphate acyltransferase from Streptococcus equi subsp. zooepidemicus (strain MGCS10565).